Consider the following 376-residue polypeptide: Glutamate 5-kinase (376 aa).

An ATP-binding site is contributed by lysine 18. Positions 58, 145, and 157 each coordinate substrate. Residues 177–178 (SD) and 218–224 (TGGMASK) contribute to the ATP site. The PUA domain maps to 280 to 358 (TGALTLDAGA…SELPGELRRP (79 aa)).

This sequence belongs to the glutamate 5-kinase family.

It is found in the cytoplasm. It catalyses the reaction L-glutamate + ATP = L-glutamyl 5-phosphate + ADP. Its pathway is amino-acid biosynthesis; L-proline biosynthesis; L-glutamate 5-semialdehyde from L-glutamate: step 1/2. Catalyzes the transfer of a phosphate group to glutamate to form L-glutamate 5-phosphate. The polypeptide is Glutamate 5-kinase (Mycobacterium tuberculosis (strain ATCC 25177 / H37Ra)).